We begin with the raw amino-acid sequence, 355 residues long: N-acylethanolamine-hydrolyzing acid amidase (355 aa).

An N-terminal signal peptide occupies residues 1-17 (MLLLQIILLLLPVICSA). C122 (nucleophile) is an active-site residue. N-linked (GlcNAc...) asparagine glycans are attached at residues N150, N160, and N328.

This sequence belongs to the acid ceramidase family. Heterodimer of an alpha and a beta subunit, produced by autocatalytic cleavage. N-glycosylated. Post-translationally, autoproteolytic cleavage at pH 4.5 gives rise to the alpha and beta subunit. Cleavage gives rise to a conformation change that activates the enzyme. The same catalytic Cys residue mediates the autoproteolytic cleavage and subsequent hydrolysis of lipid substrates.

It localises to the lysosome. The protein localises to the membrane. It catalyses the reaction N-hexadecanoylethanolamine + H2O = ethanolamine + hexadecanoate. It carries out the reaction an N-(long-chain fatty acyl)ethanolamine + H2O = a long-chain fatty acid + ethanolamine. It participates in lipid metabolism; fatty acid metabolism. Its function is as follows. Degrades bioactive fatty acid amides, such as N-palmitoylethanolamine, to ethanolamine and free fatty acids. In Caenorhabditis elegans, this protein is N-acylethanolamine-hydrolyzing acid amidase.